Consider the following 544-residue polypeptide: NADP-dependent malic enzyme (544 aa).

Positions M1–N22 are disordered. Polar residues predominate over residues P12–N21. Y92 serves as the catalytic Proton donor. NAD(+) is bound at residue R145. K163 functions as the Proton acceptor in the catalytic mechanism. Positions 234, 235, and 258 each coordinate a divalent metal cation. D258 contacts NAD(+). Residue V287–M303 participates in NADP(+) binding. N400 contacts NAD(+).

Belongs to the malic enzymes family. As to quaternary structure, homotetramer. Mg(2+) is required as a cofactor. The cofactor is Mn(2+). As to expression, expressed in the fruiting body.

The protein localises to the cytoplasm. The enzyme catalyses (S)-malate + NADP(+) = pyruvate + CO2 + NADPH. The catalysed reaction is oxaloacetate + H(+) = pyruvate + CO2. The sequence is that of NADP-dependent malic enzyme (malA) from Dictyostelium discoideum (Social amoeba).